The sequence spans 699 residues: MNPIVKSFEYGQHTVTLETGVIARQADAAVLASMGDTTVLVTVVGKKEAEAGRDFFPLTVNYQEKTYAAGKIPGGFFKREGRPSEEETLIARLIDRPIRPLFPNGFKNEVQVIITVVSVDPEIEPDIISMIGTSAALAISGIPFNGPLGAARVGYINGEYVLNPTVKQIGASQLNLVVAGTESAVLMVESEAQALPEEVMLGSVVYGHDQQQVVIKAIAEFKAEAGKPTWDWTAPVEDEALVAQIKELAEAGFIEAYQIQVKQERYAQVAVVKAAAKEALLAANPDVDLREVDNLLGSLEKKVVRGRILRGMPRIDGREPDMVRALSVLAGVLPRTHGSALFTRGETQALVTCTLGTERDAQKIDSIMGERTNRFMLHYNFPPYSVGETGMVGSPKRREIGHGKLAWRGINAVMPSAEEFPYSVRVVSEITESNGSSSMASVCGTSLALMDAGVPIKTSVAGIAMGLVKEGDDFVVLSDILGDEDHLGDMDFKVAGTRDGVTALQMDIKIEGITKEIMEIALQQAYGARVHILNVMDQAIGSHRADISDHAPRITTIKINPEKIRDVIGKGGAVIRALTEETGTTIELEDDGTVKIASSNGEATKEAIRRIEEITSEVEVGRIYNGKVIRIVDFGAFVNILPGKDGLVHISQISDERVANVSDHLELNQEVTVKVMEVDRQGRVRLSIKEAQTKEPAAE.

Mg(2+)-binding residues include Asp-485 and Asp-491. Residues 552–611 form the KH domain; the sequence is PRITTIKINPEKIRDVIGKGGAVIRALTEETGTTIELEDDGTVKIASSNGEATKEAIRRI. Residues 621 to 689 enclose the S1 motif domain; sequence GRIYNGKVIR…RQGRVRLSIK (69 aa).

It belongs to the polyribonucleotide nucleotidyltransferase family. As to quaternary structure, component of the RNA degradosome, which is a multiprotein complex involved in RNA processing and mRNA degradation. Mg(2+) serves as cofactor.

Its subcellular location is the cytoplasm. It carries out the reaction RNA(n+1) + phosphate = RNA(n) + a ribonucleoside 5'-diphosphate. Its function is as follows. Involved in mRNA degradation. Catalyzes the phosphorolysis of single-stranded polyribonucleotides processively in the 3'- to 5'-direction. The polypeptide is Polyribonucleotide nucleotidyltransferase (Shewanella oneidensis (strain ATCC 700550 / JCM 31522 / CIP 106686 / LMG 19005 / NCIMB 14063 / MR-1)).